The sequence spans 471 residues: 3-hydroxylaminophenol mutase (471 aa).

The 86-residue stretch at 15-100 folds into the GS beta-grasp domain; sequence NDVKFVDFRF…TCDVVEPSDG (86 aa). The GS catalytic domain occupies 107 to 471; that stretch reads PRSIAKRAEA…PVEFEMYYSL (365 aa).

This sequence belongs to the glutamine synthetase family.

It catalyses the reaction 3-hydroxyaminophenol = aminohydroquinone. Its activity is regulated as follows. Is inhibited by H(2)O(2). 1,10-phenanthroline inhibits the activity slightly, but other metal cation chelators such as EDTA or tiron have no effect on the activity. Divalent metal cations and hydroxylamine have also no effect on the activity. Due to the relationship of the protein with glutamine synthetases, glutamate and glutamine were tested as inhibitors; neither preincubation of the compounds with the enzyme nor their addition to the assay buffer affected 3HAP mutase activity. In terms of biological role, catalyzes the isomerization of 3-hydroxylaminophenol (3HAP) to aminohydroquinone, a step in the degradative pathway of 3-nitrophenol. The enzymatic reaction is regiospecific since it leads to the formation of aminohydroquinone exclusively, without producing the isomeric 4-aminocatechol. Can also isomerize other hydroxylaminoaromatic compounds, such as hydroxylaminobenzene to a mixture of 2-aminophenol and 4-aminophenol, 4-hydroxylaminotoluene to 6-amino-m-cresol, and 2-chloro-5-hydroxylaminophenol to 2-amino-5-chlorohydroquinone. Does not act on 4-hydroxylaminobenzoate. This is 3-hydroxylaminophenol mutase from Cupriavidus pinatubonensis (strain JMP 134 / LMG 1197) (Cupriavidus necator (strain JMP 134)).